The following is a 327-amino-acid chain: tRNA dimethylallyltransferase (327 aa).

Residue 14–21 (GPTASGKT) participates in ATP binding. 16–21 (TASGKT) serves as a coordination point for substrate. 2 interaction with substrate tRNA regions span residues 39–42 (DSAL) and 163–167 (QRIQR).

The protein belongs to the IPP transferase family. Monomer. Requires Mg(2+) as cofactor.

It carries out the reaction adenosine(37) in tRNA + dimethylallyl diphosphate = N(6)-dimethylallyladenosine(37) in tRNA + diphosphate. In terms of biological role, catalyzes the transfer of a dimethylallyl group onto the adenine at position 37 in tRNAs that read codons beginning with uridine, leading to the formation of N6-(dimethylallyl)adenosine (i(6)A). The sequence is that of tRNA dimethylallyltransferase from Xanthomonas campestris pv. campestris (strain 8004).